The following is a 211-amino-acid chain: Transcription factor ces-2 (211 aa).

The span at 83–101 shows a compositional bias: low complexity; that stretch reads VSSRSSTVSSSHFSSPQRS. 2 disordered regions span residues 83 to 152 and 184 to 211; these read VSSR…HALE and NSEV…TIEV. Residues 111–152 are compositionally biased toward basic and acidic residues; sequence PEEKKDSAYFERRRKNNDAAKRSRDARRQKEEQIASKAHALE. Positions 116–179 constitute a bZIP domain; sequence DSAYFERRRK…AQLRFLLFSK (64 aa). Residues 122 to 140 are basic motif; that stretch reads RRRKNNDAAKRSRDARRQK. The tract at residues 144-172 is leucine-zipper; sequence IASKAHALERENMQLRGKVSSLEQEAAQL. Residues 190 to 200 show a composition bias toward low complexity; that stretch reads ESNDSTETNDS. Basic and acidic residues predominate over residues 201 to 211; sequence NDSKSDSTIEV.

It belongs to the bZIP family. In terms of assembly, interacts with NFIL3 transcription factor homolog atf-2.

It localises to the nucleus. In terms of biological role, transcription factor. Required to activate programmed cell death in the sister cells of the serotoninergic neurosecretory motor (NSM) neurons. Negatively regulates the activity of ces-1 which in turn negatively regulates the activities of cell-killing genes. Binds to the DNA sequence 5'-RTTACGTAAY-3'. Involved in the development of the excretory duct cell, by positively modulating embryonic transcription of putative transcription factor lin-48, acting in concert with NFIL3 transcription factor homolog atf-2. Positively modulates expression of neuropeptide pigment dispersing factor homologs pdf-1 and pdf-2. The sequence is that of Transcription factor ces-2 (ces-2) from Caenorhabditis elegans.